Consider the following 802-residue polypeptide: MANTKKTTLDITGMTCAACSNRIEKKLNKLDDVNAQVNLTTEKATVEYNPDQHDVQEFINTIQHLGYGVAVETVELDITGMTCAACSSRIEKVLNKMDGVQNATVNLTTEQAKVDYYPEETDADKLVTRIQKLGYDASIKDNNKDQTSRKAEALQHKLIKLIISAVLSLPLLMLMFVHLFNMHIPALFTNPWFQFILATPVQFIIGWQFYVGAYKNLRNGGANMDVLVAVGTSAAYFYSIYEMVRWLNGSTTQPHLYFETSAVLITLILFGKYLEARAKSQTTNALGELLSLQAKEARILKDGNEVMIPLNEVHVGDTLIVKPGEKIPVDGKIIKGMTAIDESMLTGESIPVEKNVDDTVIGSTMNKNGTITMTATKVGGDTALANIIKVVEEAQSSKAPIQRLADIISGYFVPIVVGIALLTFIVWITLVTPGTFEPALVASISVLVIACPCALGLATPTSIMVGTGRAAENGILFKGGEFVERTHQIDTIVLDKTGTITNGRPVVTDYHGDNQTLQLLATAEKDSEHPLAEAIVNYAKEKQLILTETTTFKAVPGHGIEATIDHHHILVGNRKLMADNDISLPKHISDDLTHYERDGKTAMLIAVNYSLTGIIAVADTVKDHAKDAIKQLHDMGIEVAMLTGDNKNTAQAIAKQVGIDTVIADILPEEKAAQIAKLQQQGKKVAMVGDGVNDAPALVKADIGIAIGTGTEVAIEAADITILGGDLMLIPKAIYASKATIRNIRQNLFWAFGYNIAGIPIAALGLLAPWVAGAAMALSSVSVVTNALRLKKMRLEPRRKDA.

HMA domains follow at residues 5–70 (KKTT…YGVA) and 72–138 (ETVE…YDAS). Residues Cys-16, Cys-19, Cys-83, and Cys-86 each coordinate Cu(+). A run of 6 helical transmembrane segments spans residues 161–181 (LIIS…HLFN), 192–212 (WFQF…FYVG), 224–244 (MDVL…YEMV), 256–276 (LYFE…YLEA), 411–431 (YFVP…ITLV), and 438–458 (PALV…LGLA). Asp-495 serves as the catalytic 4-aspartylphosphate intermediate. Asp-690 and Asp-694 together coordinate Mg(2+). Transmembrane regions (helical) follow at residues 748–767 (LFWA…LGLL) and 771–790 (VAGA…ALRL).

The protein belongs to the cation transport ATPase (P-type) (TC 3.A.3) family. Type IB subfamily.

The protein localises to the cell membrane. It catalyses the reaction Cu(+)(in) + ATP + H2O = Cu(+)(out) + ADP + phosphate + H(+). Involved in copper export. This Staphylococcus aureus (strain COL) protein is Copper-exporting P-type ATPase (copA).